A 196-amino-acid polypeptide reads, in one-letter code: Signaling threshold-regulating transmembrane adapter 1 (196 aa).

Residues 1–24 form the signal peptide; that stretch reads MNQADPRLRAVCLWTLTSAAMSRG. At 25–40 the chain is on the extracellular side; sequence DNCTDLLALGIPSITQ. N-linked (GlcNAc...) asparagine glycosylation is present at Asn-26. A helical membrane pass occupies residues 41–61; sequence AWGLWVLLGAVTLLFLISLAA. Residues 62–196 lie on the Cytoplasmic side of the membrane; the sequence is HLSQWTRGRS…AYANSQPAAS (135 aa). A phosphoserine mark is found at Ser-80 and Ser-83. Position 90 is a phosphotyrosine (Tyr-90). The interval 90–93 is interaction with GRB2; sequence YGNL. A Phosphoserine modification is found at Ser-102. Tyr-127 is subject to Phosphotyrosine. The segment at 132 to 167 is disordered; sequence LRPPQGRIPGPGTPVKYSEVVLDSEPKSQASGPEPE. Thr-144 carries the phosphothreonine modification. An interaction with PTPN11 region spans residues 146 to 151; it reads VKYSEV. A phosphotyrosine mark is found at Tyr-148 and Tyr-169. An interaction with CSK region spans residues 169 to 172; it reads YASV. Phosphoserine is present on Ser-182. Tyr-188 carries the post-translational modification Phosphotyrosine. Residues 188–191 form an interaction with GRB2 region; sequence YANS.

Homodimer; disulfide-linked. When phosphorylated, interacts with PTPN11/SHP2, GRB2 and CSK. Phosphorylated on tyrosines by LCK, FYN or ZAP70 upon TCR activation; which leads to the recruitment of PTPN11, GRB2 and CSK. Specifically expressed in T- and B-cells. Present in plasma cells but not in germinal center B-cells (at protein level). Expressed in T- and B-cell lymphoma.

Its subcellular location is the cell membrane. Negatively regulates TCR (T-cell antigen receptor)-mediated signaling in T-cells. Involved in positive selection of T-cells. The protein is Signaling threshold-regulating transmembrane adapter 1 (SIT1) of Homo sapiens (Human).